A 192-amino-acid chain; its full sequence is Ion-translocating oxidoreductase complex subunit A (192 aa).

The next 6 membrane-spanning stretches (helical) occupy residues 5–25, 39–59, 63–83, 102–122, 134–154, and 171–191; these read ILLI…FLGL, VGMG…AYLV, ILIP…VIAV, LLGI…VALL, VVYG…FAAL, and SIAL…TGLV.

It belongs to the NqrDE/RnfAE family. The complex is composed of six subunits: RnfA, RnfB, RnfC, RnfD, RnfE and RnfG.

It localises to the cell inner membrane. In terms of biological role, part of a membrane-bound complex that couples electron transfer with translocation of ions across the membrane. The protein is Ion-translocating oxidoreductase complex subunit A of Haemophilus influenzae (strain ATCC 51907 / DSM 11121 / KW20 / Rd).